The sequence spans 305 residues: Dermonecrotic toxin LiSicTox-alphaII1 (305 aa).

Residues 1–18 (MLLHIALILGCWSVFSEG) form the signal peptide. Positions 19-26 (AETDVAER) are excised as a propeptide. His-38 is a catalytic residue. Mg(2+) contacts are provided by Glu-58 and Asp-60. Residue His-74 is the Nucleophile of the active site. 2 disulfide bridges follow: Cys-78/Cys-84 and Cys-80/Cys-223. Asp-118 lines the Mg(2+) pocket.

This sequence belongs to the arthropod phospholipase D family. Class II subfamily. Class IIa sub-subfamily. Mg(2+) serves as cofactor. Expressed by the venom gland.

The protein resides in the secreted. The catalysed reaction is an N-(acyl)-sphingosylphosphocholine = an N-(acyl)-sphingosyl-1,3-cyclic phosphate + choline. It carries out the reaction an N-(acyl)-sphingosylphosphoethanolamine = an N-(acyl)-sphingosyl-1,3-cyclic phosphate + ethanolamine. It catalyses the reaction a 1-acyl-sn-glycero-3-phosphocholine = a 1-acyl-sn-glycero-2,3-cyclic phosphate + choline. The enzyme catalyses a 1-acyl-sn-glycero-3-phosphoethanolamine = a 1-acyl-sn-glycero-2,3-cyclic phosphate + ethanolamine. In terms of biological role, dermonecrotic toxins cleave the phosphodiester linkage between the phosphate and headgroup of certain phospholipids (sphingolipid and lysolipid substrates), forming an alcohol (often choline) and a cyclic phosphate. This toxin acts on sphingomyelin (SM) wih high activity. It may also act on ceramide phosphoethanolamine (CPE), lysophosphatidylcholine (LPC) and lysophosphatidylethanolamine (LPE), but not on lysophosphatidylserine (LPS), and lysophosphatidylglycerol (LPG). It acts by transphosphatidylation, releasing exclusively cyclic phosphate products as second products. Shows high hemolytic activity. Causes dermonecrosis, induces inflammatory response, platelet aggregation and increases vessel permeability. Shows no lethality when injected at higher dose into mice. May cause complement-dependent hemolysis as well as in a complement-independent manner. The hemolysis provoked in a complement-independent manner may be composed of several steps. The toxin may bind to erythrocyte membranes, may hydrolyze membrane phospholipids (SM and LPC) thus generating metabolism products that may cause hemolysis, probably by provoking an increase of calcium inside cells. The calcium influx may be due to the opening of L-type calcium channels, since L-type calcium channel blockers inhibit calcium influx. The protein is Dermonecrotic toxin LiSicTox-alphaII1 of Loxosceles intermedia (Brown spider).